A 74-amino-acid chain; its full sequence is Putative membrane protein insertion efficiency factor (74 aa).

Belongs to the UPF0161 family.

The protein localises to the cell inner membrane. In terms of biological role, could be involved in insertion of integral membrane proteins into the membrane. The polypeptide is Putative membrane protein insertion efficiency factor (Endomicrobium trichonymphae).